We begin with the raw amino-acid sequence, 463 residues long: Fibrinogen beta chain (463 aa).

The segment covering 1–12 (ASVEYDNEEDSP) has biased composition (acidic residues). The interval 1–56 (ASVEYDNEEDSPQIDARAHRPLDKRQEAAPTLRPVAPPISGTGYQPRPPKQDKQAM) is disordered. Position 5 is a sulfotyrosine (Tyr-5). Over residues 16-27 (ARAHRPLDKRQE) the composition is skewed to basic and acidic residues. 2 disulfides stabilise this stretch: Cys-205–Cys-289 and Cys-215–Cys-244. One can recognise a Fibrinogen C-terminal domain in the interval 206 to 461 (NIPVVSGREC…KMSMKIKPYF (256 aa)). A glycan (N-linked (GlcNAc...) asparagine) is linked at Asn-367. Asp-384, Asp-386, and Trp-388 together coordinate Ca(2+). A disulfide bridge links Cys-397 with Cys-410.

As to quaternary structure, heterohexamer; disulfide linked. Contains 2 sets of 3 non-identical chains (alpha, beta and gamma). The 2 heterotrimers are in head to head conformation with the N-termini in a small central domain. In terms of processing, conversion of fibrinogen to fibrin is triggered by thrombin, which cleaves fibrinopeptides A and B from alpha and beta chains, and thus exposes the N-terminal polymerization sites responsible for the formation of the soft clot. The soft clot is converted into the hard clot by factor XIIIA which catalyzes the epsilon-(gamma-glutamyl)lysine cross-linking between gamma chains (stronger) and between alpha chains (weaker) of different monomers.

It localises to the secreted. In terms of biological role, cleaved by the protease thrombin to yield monomers which, together with fibrinogen alpha (FGA) and fibrinogen gamma (FGG), polymerize to form an insoluble fibrin matrix. Fibrin has a major function in hemostasis as one of the primary components of blood clots. This is Fibrinogen beta chain (FGB) from Gallus gallus (Chicken).